A 93-amino-acid chain; its full sequence is uncharacterized protein (93 aa).

A signal peptide spans 1-22 (MNKYWLSGIIFLAYGLASPAFS).

This is an uncharacterized protein from Escherichia coli (strain K12).